The chain runs to 472 residues: Nuclear receptor subfamily 0 group B member 1 (472 aa).

3 repeat units span residues 1–67 (MAGE…YRCC), 68–135 (FCGE…YRCC), and 136–202 (FCGE…YRSY). The tract at residues 1–255 (MAGEDHPWQG…RLITLKDPQV (255 aa)) is 4 X 67 AA tandem repeats. Short sequence motifs (LXXLL motif) lie at residues 13 to 17 (LYNLL), 80 to 84 (LYSML), and 148 to 152 (LYSLL). The NR LBD domain maps to 190-471 (QSTQAMAFLY…DMMLEMLCAK (282 aa)). The stretch at 203–255 (VCGEEQPQQISVASGTPVSADQTPATPQEQPRAPWWDASPGVQRLITLKDPQV) is one 4; truncated repeat. A compositionally biased stretch (polar residues) spans 214–231 (VASGTPVSADQTPATPQE). Disordered stretches follow at residues 214-238 (VASG…APWW) and 324-343 (TTRR…ATEQ). The short motif at 463-468 (MMLEML) is the AF-2 motif element.

The protein belongs to the nuclear hormone receptor family. NR0 subfamily. In terms of assembly, homodimer. Interacts with NR5A1, NR5A2, NR0B2 and with COPS2. Interacts with ESRRB; represses ESRRB activity at the GATA6 promoter. In terms of tissue distribution, expressed in adult cerebral cortex, spinal cord, thymus, heart, lung, ovary, testis, adrenal gland, hypothalamus, spleen and kidney.

It localises to the nucleus. Its subcellular location is the cytoplasm. In terms of biological role, nuclear receptor that lacks a DNA-binding domain and acts as a corepressor that inhibits the transcriptional activity of other nuclear receptors through heterodimeric interactions. Component of a cascade required for the development of the hypothalamic-pituitary-adrenal-gonadal axis. May also have a role in the development of the embryo and in the maintenance of embryonic stem cell pluripotency. The chain is Nuclear receptor subfamily 0 group B member 1 (Nr0b1) from Mus musculus (Mouse).